The sequence spans 514 residues: Putative selenium-binding protein (514 aa).

It belongs to the selenium-binding protein family.

The sequence is that of Putative selenium-binding protein from Caenorhabditis briggsae.